The sequence spans 117 residues: MDDDFLFMTLLYDFYGALLTDKQREIFEMYYLNDYSLGEISELLDISRQGVYDTLKRAESSLEFFEEKLGLVKRHQEIMNKLDKIKKGIEIIRERERDPEILKIIEEIAREIEELNP.

The protein belongs to the UPF0122 family.

In terms of biological role, might take part in the signal recognition particle (SRP) pathway. This is inferred from the conservation of its genetic proximity to ftsY/ffh. May be a regulatory protein. This is UPF0122 protein Teth39_1278 from Thermoanaerobacter pseudethanolicus (strain ATCC 33223 / 39E) (Clostridium thermohydrosulfuricum).